The chain runs to 106 residues: UPF0145 protein MA_3383 (106 aa).

It belongs to the UPF0145 family.

The sequence is that of UPF0145 protein MA_3383 from Methanosarcina acetivorans (strain ATCC 35395 / DSM 2834 / JCM 12185 / C2A).